The primary structure comprises 542 residues: DNA-binding protein modulo (542 aa).

Residues 1–166 (MAQKKAVTVK…RGIPKVKVGK (166 aa)) form a disordered region. Residues S42 and S44 each carry the phosphoserine modification. Positions 59 to 114 (SEEDESDVEEQNDEQPGDDSDFETEEAAGLIDDEAEEDEEYNSDDEEDDDDDELEP) are enriched in acidic residues. S120, S129, and S142 each carry phosphoserine. The span at 123-135 (ADEVDESDDDEEA) shows a compositional bias: acidic residues. Residues 136–158 (PVEKPVSKKSEKANSEKSEENRG) show a composition bias toward basic and acidic residues. RRM domains follow at residues 175-251 (QIVF…QPRN), 258-331 (RTVV…RISQ), 340-429 (LTLV…NLTS), and 420-489 (RAIL…PNSL). S304 carries the phosphoserine modification. S330 bears the Phosphoserine; by PKA mark. S443 carries the post-translational modification Phosphoserine. The segment at 505–542 (RAPRKFQKDTKPNFGKKPFNKRPAQENGGKSFVKRARF) is disordered.

In terms of processing, the N-terminus is blocked.

Its subcellular location is the nucleus. Its capacity to bind DNA and protein(s), and its differential expression during development suggest a role in the regulation of gene expression during Drosophila development. It could, in interaction with other factors, be required for the translation of instructions provided by pattern forming genes and controls, via chromatin changes, the activity of genes critical for the process of morphogenesis of several embryonic territories. This Drosophila melanogaster (Fruit fly) protein is DNA-binding protein modulo (mod).